We begin with the raw amino-acid sequence, 250 residues long: Ubiquinone/menaquinone biosynthesis C-methyltransferase UbiE (250 aa).

S-adenosyl-L-methionine-binding positions include Thr-73, Asp-94, 122–123, and Ser-139; that span reads NS.

The protein belongs to the class I-like SAM-binding methyltransferase superfamily. MenG/UbiE family.

The catalysed reaction is a 2-demethylmenaquinol + S-adenosyl-L-methionine = a menaquinol + S-adenosyl-L-homocysteine + H(+). It carries out the reaction a 2-methoxy-6-(all-trans-polyprenyl)benzene-1,4-diol + S-adenosyl-L-methionine = a 5-methoxy-2-methyl-3-(all-trans-polyprenyl)benzene-1,4-diol + S-adenosyl-L-homocysteine + H(+). It functions in the pathway quinol/quinone metabolism; menaquinone biosynthesis; menaquinol from 1,4-dihydroxy-2-naphthoate: step 2/2. It participates in cofactor biosynthesis; ubiquinone biosynthesis. In terms of biological role, methyltransferase required for the conversion of demethylmenaquinol (DMKH2) to menaquinol (MKH2) and the conversion of 2-polyprenyl-6-methoxy-1,4-benzoquinol (DDMQH2) to 2-polyprenyl-3-methyl-6-methoxy-1,4-benzoquinol (DMQH2). This Wigglesworthia glossinidia brevipalpis protein is Ubiquinone/menaquinone biosynthesis C-methyltransferase UbiE.